A 274-amino-acid polypeptide reads, in one-letter code: Rhamnulose-1-phosphate aldolase (274 aa).

The active site involves E117. The Zn(2+) site is built by H141, H143, and H212.

It belongs to the aldolase class II family. RhaD subfamily. Homotetramer. Zn(2+) serves as cofactor.

Its subcellular location is the cytoplasm. It catalyses the reaction L-rhamnulose 1-phosphate = (S)-lactaldehyde + dihydroxyacetone phosphate. It participates in carbohydrate degradation; L-rhamnose degradation; glycerone phosphate from L-rhamnose: step 3/3. In terms of biological role, catalyzes the reversible cleavage of L-rhamnulose-1-phosphate to dihydroxyacetone phosphate (DHAP) and L-lactaldehyde. This Pectobacterium carotovorum subsp. carotovorum (strain PC1) protein is Rhamnulose-1-phosphate aldolase.